The sequence spans 95 residues: Integration host factor subunit beta (95 aa).

It belongs to the bacterial histone-like protein family. Heterodimer of an alpha and a beta chain.

In terms of biological role, this protein is one of the two subunits of integration host factor, a specific DNA-binding protein that functions in genetic recombination as well as in transcriptional and translational control. The sequence is that of Integration host factor subunit beta from Jannaschia sp. (strain CCS1).